The chain runs to 159 residues: uncharacterized protein (159 aa).

This is an uncharacterized protein from Aquifex aeolicus (strain VF5).